The following is a 90-amino-acid chain: Barrier-to-autointegration factor-like protein (90 aa).

Belongs to the BAF family. In terms of assembly, homodimer. Heterodimerizes with BANF1.

It is found in the nucleus. Its subcellular location is the cytoplasm. Functionally, may play a role in BANF1 regulation and influence tissue-specific roles of BANF1. The sequence is that of Barrier-to-autointegration factor-like protein (BANF2) from Bos taurus (Bovine).